The following is an 875-amino-acid chain: Kelch-like protein 29 (875 aa).

Positions 113–126 (IRWGQTPVNQSTPW) are enriched in polar residues. Disordered regions lie at residues 113-145 (IRWGQTPVNQSTPWDTDEPPSKQMRESDNPGTG) and 240-291 (GVGQ…DSAH). A compositionally biased stretch (basic and acidic residues) spans 131 to 140 (PPSKQMRESD). The segment covering 270–280 (PSAALPSSVPA) has biased composition (low complexity). Positions 329–401 (TDLKIVVEGR…VYTGSLVIDS (73 aa)) constitute a BTB domain. 6 Kelch repeats span residues 585-635 (VIVL…VSAG), 637-683 (NIYL…VYDG), 684-730 (KIYT…VCGG), 732-778 (IYVF…TLNG), 779-821 (FVFI…VLDG), and 822-870 (KIYA…VIKK).

This chain is Kelch-like protein 29 (Klhl29), found in Mus musculus (Mouse).